The chain runs to 72 residues: uncharacterized protein (72 aa).

This is an uncharacterized protein from Vaccinia virus (strain Copenhagen) (VACV).